The following is a 150-amino-acid chain: UPF0336 protein SGR_2883 (150 aa).

Residues R10–A116 form the MaoC-like domain.

This sequence belongs to the UPF0336 family.

The protein is UPF0336 protein SGR_2883 of Streptomyces griseus subsp. griseus (strain JCM 4626 / CBS 651.72 / NBRC 13350 / KCC S-0626 / ISP 5235).